Consider the following 287-residue polypeptide: Hydroxysteroid 11-beta-dehydrogenase 1-like protein (287 aa).

The first 15 residues, 1–15 (MKVLLLTGLGALFFA), serve as a signal peptide directing secretion. NADP(+) is bound by residues 36-62 (GVSA…TAHT), 87-88 (DM), and 114-116 (NHL). S165 serves as a coordination point for substrate. Y178 functions as the Proton acceptor in the catalytic mechanism. Residues 178–182 (YSAAK) and 211–217 (GLRDRAS) contribute to the NADP(+) site. N280 carries an N-linked (GlcNAc...) asparagine glycan.

This sequence belongs to the short-chain dehydrogenases/reductases (SDR) family.

Its subcellular location is the secreted. The catalysed reaction is cortisone + NADPH + H(+) = cortisol + NADP(+). Unidirectional NADP(+)-dependent cortisol dehydrogenase (in vitro). The chain is Hydroxysteroid 11-beta-dehydrogenase 1-like protein (HSD11B1L) from Bos taurus (Bovine).